We begin with the raw amino-acid sequence, 478 residues long: MTSSTTSSIVTRFAPSPTGFLHIGGARTALFNWLYARGRGGKMLLRIEDTDRERSTTAAIDAILDGLKWLELDWDGEVIYQYSRAARHREVAEQLLATGMAYRCYATAEELVAMREKARAEGRTRLYDGMWRDRDPKEAPEGVKPTIRLRAPLTGETMVEDQVQGRVVWQNENLDDLVLLRGDGNPTYMLAVVVDDHDMGVTHVIRGDDHLINAARQKQIYDALGWTVPSMSHIPLIHGPDGSKLSKRHGALGVDAYRAMGYLPSALRNYLVRLGWSHGDQEIFSTEEMIKAFDLPAIGRSAARFDFAKLENLNGHYIRHSDDAELVRQFEDVLNYVPNGAALKAKLNDATRAQLTQAMPSLKERAKTLLELIDGAAFIFADRPLPIDAKAAALLTPESRALIGRLHAALSAVEPWSGPATEAALRAFAEANNLKLGAVAQPLRAALTGRTTSPGIFDVLAILGRDESLGRLKDQAIA.

Residues 15–25 carry the 'HIGH' region motif; the sequence is PSPTGFLHIGG. The 'KMSKS' region motif lies at 244 to 248; that stretch reads KLSKR. Lys-247 is a binding site for ATP.

It belongs to the class-I aminoacyl-tRNA synthetase family. Glutamate--tRNA ligase type 1 subfamily. Monomer.

The protein resides in the cytoplasm. It catalyses the reaction tRNA(Glu) + L-glutamate + ATP = L-glutamyl-tRNA(Glu) + AMP + diphosphate. Functionally, catalyzes the attachment of glutamate to tRNA(Glu) in a two-step reaction: glutamate is first activated by ATP to form Glu-AMP and then transferred to the acceptor end of tRNA(Glu). The sequence is that of Glutamate--tRNA ligase from Bradyrhizobium sp. (strain ORS 278).